A 127-amino-acid chain; its full sequence is Aspartate 1-decarboxylase (127 aa).

The active-site Schiff-base intermediate with substrate; via pyruvic acid is S25. A Pyruvic acid (Ser) modification is found at S25. T57 contributes to the substrate binding site. Catalysis depends on Y58, which acts as the Proton donor. 73-75 (GAA) contacts substrate.

Belongs to the PanD family. In terms of assembly, heterooctamer of four alpha and four beta subunits. The cofactor is pyruvate. Is synthesized initially as an inactive proenzyme, which is activated by self-cleavage at a specific serine bond to produce a beta-subunit with a hydroxyl group at its C-terminus and an alpha-subunit with a pyruvoyl group at its N-terminus.

It localises to the cytoplasm. The enzyme catalyses L-aspartate + H(+) = beta-alanine + CO2. The protein operates within cofactor biosynthesis; (R)-pantothenate biosynthesis; beta-alanine from L-aspartate: step 1/1. Its function is as follows. Catalyzes the pyruvoyl-dependent decarboxylation of aspartate to produce beta-alanine. In Bacillus cereus (strain B4264), this protein is Aspartate 1-decarboxylase.